Consider the following 151-residue polypeptide: SsrA-binding protein (151 aa).

The segment at 124 to 151 (GKKLHDKRESEKERDWNRQKSRLLKAHG) is disordered. Residues 129–141 (DKRESEKERDWNR) show a composition bias toward basic and acidic residues. Basic residues predominate over residues 142-151 (QKSRLLKAHG).

Belongs to the SmpB family.

The protein localises to the cytoplasm. Required for rescue of stalled ribosomes mediated by trans-translation. Binds to transfer-messenger RNA (tmRNA), required for stable association of tmRNA with ribosomes. tmRNA and SmpB together mimic tRNA shape, replacing the anticodon stem-loop with SmpB. tmRNA is encoded by the ssrA gene; the 2 termini fold to resemble tRNA(Ala) and it encodes a 'tag peptide', a short internal open reading frame. During trans-translation Ala-aminoacylated tmRNA acts like a tRNA, entering the A-site of stalled ribosomes, displacing the stalled mRNA. The ribosome then switches to translate the ORF on the tmRNA; the nascent peptide is terminated with the 'tag peptide' encoded by the tmRNA and targeted for degradation. The ribosome is freed to recommence translation, which seems to be the essential function of trans-translation. This chain is SsrA-binding protein, found in Rhizobium johnstonii (strain DSM 114642 / LMG 32736 / 3841) (Rhizobium leguminosarum bv. viciae).